The sequence spans 623 residues: Procollagen galactosyltransferase 1 (623 aa).

A signal peptide spans 1-30 (MAAAPRACKGHGRPLPVLLLLLLLALPPLG). Residues N97, N185, and N382 are each glycosylated (N-linked (GlcNAc...) asparagine). Positions 589-607 (RAKSQKMREQQALSREAKN) are enriched in basic and acidic residues. Positions 589–623 (RAKSQKMREQQALSREAKNSDVLQSPLDSAARDEL) are disordered. The Prevents secretion from ER signature appears at 620–623 (RDEL).

Belongs to the glycosyltransferase 25 family. Post-translationally, N-glycosylated.

It is found in the endoplasmic reticulum lumen. It carries out the reaction (5R)-5-hydroxy-L-lysyl-[collagen] + UDP-alpha-D-galactose = (5R)-5-O-(beta-D-galactosyl)-5-hydroxy-L-lysyl-[collagen] + UDP + H(+). Beta-galactosyltransferase that transfers beta-galactose to hydroxylysine residues of type I collagen. By acting on collagen glycosylation, facilitates the formation of collagen triple helix. Also involved in the biosynthesis of collagen type IV. This chain is Procollagen galactosyltransferase 1 (COLGALT1), found in Bos taurus (Bovine).